The following is a 446-amino-acid chain: Transcriptional adapter 2-alpha (446 aa).

The segment at 12-69 adopts a ZZ-type zinc-finger fold; it reads FDKPPCRGCSSYLTEPYVKCAECGPPPFLLCLQCFTRGFEYKKHQSDHTYEIMTSDFP. The Zn(2+) site is built by Cys17, Cys20, Cys31, Cys34, Cys42, Cys45, His55, and His59. An SANT domain is found at 70–122; that stretch reads VLDPNWTAQEEMALLEAVMDCGFGNWQDVANQMCTKSKEECEKHYMKHFINNP. A disordered region spans residues 345 to 375; sequence DIDSGPTPAAPIPSNSGRRSAPPLNLTGLPG. One can recognise an SWIRM domain in the interval 359–446; it reads NSGRRSAPPL…LIREGYITKA (88 aa). The DNA-binding element occupies 429-438; sequence KTRKIYDFLI.

It is found in the nucleus. The protein resides in the chromosome. Functionally, component of some complex with histone acetyltransferase activity. Required for the function of some acidic activation domains, which activate transcription from a distant site. Binds double-stranded DNA. Binds dinucleosomes, probably at the linker region between neighboring nucleosomes. Plays a role in chromatin remodeling. The protein is Transcriptional adapter 2-alpha (TADA2A) of Gallus gallus (Chicken).